We begin with the raw amino-acid sequence, 159 residues long: Ribosomal RNA large subunit methyltransferase H (159 aa).

Residues L76, G108, and 127–132 each bind S-adenosyl-L-methionine; that span reads FGKLTL.

This sequence belongs to the RNA methyltransferase RlmH family. Homodimer.

The protein resides in the cytoplasm. It catalyses the reaction pseudouridine(1915) in 23S rRNA + S-adenosyl-L-methionine = N(3)-methylpseudouridine(1915) in 23S rRNA + S-adenosyl-L-homocysteine + H(+). Its function is as follows. Specifically methylates the pseudouridine at position 1915 (m3Psi1915) in 23S rRNA. This is Ribosomal RNA large subunit methyltransferase H from Latilactobacillus sakei subsp. sakei (strain 23K) (Lactobacillus sakei subsp. sakei).